Here is a 573-residue protein sequence, read N- to C-terminus: 2-succinyl-5-enolpyruvyl-6-hydroxy-3-cyclohexene-1-carboxylate synthase (573 aa).

The protein belongs to the TPP enzyme family. MenD subfamily. Homodimer. Mg(2+) is required as a cofactor. Requires Mn(2+) as cofactor. Thiamine diphosphate serves as cofactor.

It carries out the reaction isochorismate + 2-oxoglutarate + H(+) = 5-enolpyruvoyl-6-hydroxy-2-succinyl-cyclohex-3-ene-1-carboxylate + CO2. Its pathway is quinol/quinone metabolism; 1,4-dihydroxy-2-naphthoate biosynthesis; 1,4-dihydroxy-2-naphthoate from chorismate: step 2/7. It participates in quinol/quinone metabolism; menaquinone biosynthesis. In terms of biological role, catalyzes the thiamine diphosphate-dependent decarboxylation of 2-oxoglutarate and the subsequent addition of the resulting succinic semialdehyde-thiamine pyrophosphate anion to isochorismate to yield 2-succinyl-5-enolpyruvyl-6-hydroxy-3-cyclohexene-1-carboxylate (SEPHCHC). This chain is 2-succinyl-5-enolpyruvyl-6-hydroxy-3-cyclohexene-1-carboxylate synthase, found in Shewanella sp. (strain ANA-3).